Here is a 210-residue protein sequence, read N- to C-terminus: Superoxide dismutase [Mn], mitochondrial (210 aa).

The Mn(2+) site is built by H29, H77, D164, and H168.

It belongs to the iron/manganese superoxide dismutase family. Homotetramer. Mn(2+) serves as cofactor.

It is found in the mitochondrion matrix. The catalysed reaction is 2 superoxide + 2 H(+) = H2O2 + O2. Its function is as follows. Destroys superoxide anion radicals which are normally produced within the cells and which are toxic to biological systems. The protein is Superoxide dismutase [Mn], mitochondrial (sodB) of Aspergillus niger.